Here is a 428-residue protein sequence, read N- to C-terminus: Adenylosuccinate synthetase (428 aa).

GTP-binding positions include 12 to 18 (GDEGKGK) and 40 to 42 (GHT). Aspartate 13 acts as the Proton acceptor in catalysis. Positions 13 and 40 each coordinate Mg(2+). IMP-binding positions include 13 to 16 (DEGK), 38 to 41 (NAGH), threonine 127, arginine 141, glutamine 222, threonine 237, and arginine 301. Histidine 41 serves as the catalytic Proton donor. 297–303 (TVTKRPR) provides a ligand contact to substrate. Residues arginine 303, 329-331 (CLD), and 411-413 (SVG) each bind GTP.

Belongs to the adenylosuccinate synthetase family. As to quaternary structure, homodimer. Requires Mg(2+) as cofactor.

Its subcellular location is the cytoplasm. The catalysed reaction is IMP + L-aspartate + GTP = N(6)-(1,2-dicarboxyethyl)-AMP + GDP + phosphate + 2 H(+). The protein operates within purine metabolism; AMP biosynthesis via de novo pathway; AMP from IMP: step 1/2. Plays an important role in the de novo pathway of purine nucleotide biosynthesis. Catalyzes the first committed step in the biosynthesis of AMP from IMP. The protein is Adenylosuccinate synthetase of Levilactobacillus brevis (strain ATCC 367 / BCRC 12310 / CIP 105137 / JCM 1170 / LMG 11437 / NCIMB 947 / NCTC 947) (Lactobacillus brevis).